The following is a 28-amino-acid chain: Potassium channel toxin kappa-KTx 2.9 (28 aa).

2 disulfides stabilise this stretch: cysteine 4/cysteine 22 and cysteine 8/cysteine 18.

The protein belongs to the short scorpion toxin superfamily. Potassium channel inhibitor family. Gamma-KTx 2 subfamily. Contains 2 disulfide bonds. Expressed by the venom gland.

The protein resides in the secreted. Functionally, reversibly blocks voltage-gated potassium channels Kv1.2/KCNA2 and Kv1.3/KCNA3. The polypeptide is Potassium channel toxin kappa-KTx 2.9 (Pandinus imperator (Emperor scorpion)).